We begin with the raw amino-acid sequence, 569 residues long: Protein germ cell-less (569 aa).

Residues 17-43 (SNRRKRKRSTDSSLGKDDPAQLDTTQP) form a disordered region. Positions 66–136 (SDVAVMALDK…MYSDEIEIES (71 aa)) constitute a BTB domain. A disordered region spans residues 517–553 (GANSDRPLSPSSADDSAVFIGDSEPSTPSSPAPRPRI).

The protein localises to the cytoplasm. Required for the specification of pole cells and germ cell formation. Mothers with reduced glc function give rise to sterile adult progeny that lack germ cells. This is Protein germ cell-less (gcl) from Drosophila melanogaster (Fruit fly).